The sequence spans 213 residues: Putative 3-methyladenine DNA glycosylase (213 aa).

This sequence belongs to the DNA glycosylase MPG family.

This is Putative 3-methyladenine DNA glycosylase from Leifsonia xyli subsp. xyli (strain CTCB07).